Here is a 2408-residue protein sequence, read N- to C-terminus: Protein ELYS (2408 aa).

Residues 1-492 (MQNLEAQVTG…SGLIHFACTG (492 aa)) are seven-bladed beta propeller repeats. The interval 1016–2408 (YSLPSLVWRE…AKPVTRRKMR (1393 aa)) is disordered. Residues 1124 to 1145 (PLTSSDTDNNQTPHKSPLLKTS) show a composition bias toward polar residues. Acidic residues predominate over residues 1457–1466 (NDQDSEEIEE). Polar residues-rich tracts occupy residues 1705–1719 (INEG…QSTL) and 1735–1750 (PADS…TLPT). Positions 2136–2149 (QASKIQEDLSDTPR) are enriched in basic and acidic residues. Sufficient for chromatin-binding stretches follow at residues 2281-2359 (STQY…PVEI) and 2359-2408 (IKLI…RKMR). Residues 2281–2408 (STQYVFSPPS…AKPVTRRKMR (128 aa)) are sufficient to block nuclear pore assembly. The segment at residues 2329–2341 (SKPRGRPPKHKAK) is a DNA-binding region (a.T hook). Residues 2331 to 2348 (PRGRPPKHKAKAVTRVLK) show a composition bias toward basic residues. Residues 2378-2389 (DSTEAKGAEKIS) show a composition bias toward basic and acidic residues.

Belongs to the ELYS family. As to quaternary structure, interacts with the Nup107-160 subcomplex of the NPC.

The protein resides in the nucleus. Its subcellular location is the nuclear pore complex. It localises to the cytoplasm. The protein localises to the nucleoplasm. Its function is as follows. Required for the assembly of a functional nuclear pore complex (NPC) on the surface of chromosomes as nuclei form at the end of mitosis. May initiate NPC assembly by binding to chromatin and recruiting the Nup107-160 subcomplex, which may in turn recruit membrane vesicles containing pom121 and tmem48/ndc1. Association with chromatin may require the presence of the mcm2-mcm7 complex, suggesting a mechanism for coordination of nuclear assembly and the inactivation of replication licensing. The protein is Protein ELYS (ahctf1) of Xenopus laevis (African clawed frog).